A 232-amino-acid polypeptide reads, in one-letter code: Ribose-5-phosphate isomerase A (232 aa).

Substrate is bound by residues T31 to T34, D87 to D90, and K100 to G103. Residue E109 is the Proton acceptor of the active site. K127 provides a ligand contact to substrate.

This sequence belongs to the ribose 5-phosphate isomerase family. In terms of assembly, homodimer.

It carries out the reaction aldehydo-D-ribose 5-phosphate = D-ribulose 5-phosphate. Its pathway is carbohydrate degradation; pentose phosphate pathway; D-ribose 5-phosphate from D-ribulose 5-phosphate (non-oxidative stage): step 1/1. Catalyzes the reversible conversion of ribose-5-phosphate to ribulose 5-phosphate. The chain is Ribose-5-phosphate isomerase A from Bifidobacterium longum (strain DJO10A).